The primary structure comprises 517 residues: ATP synthase subunit alpha 2 (517 aa).

173-180 lines the ATP pocket; that stretch reads GDRQTGKT.

Belongs to the ATPase alpha/beta chains family. F-type ATPases have 2 components, CF(1) - the catalytic core - and CF(0) - the membrane proton channel. CF(1) has five subunits: alpha(3), beta(3), gamma(1), delta(1), epsilon(1). CF(0) has three main subunits: a(1), b(2) and c(9-12). The alpha and beta chains form an alternating ring which encloses part of the gamma chain. CF(1) is attached to CF(0) by a central stalk formed by the gamma and epsilon chains, while a peripheral stalk is formed by the delta and b chains.

Its subcellular location is the cell inner membrane. It carries out the reaction ATP + H2O + 4 H(+)(in) = ADP + phosphate + 5 H(+)(out). Functionally, produces ATP from ADP in the presence of a proton gradient across the membrane. The alpha chain is a regulatory subunit. This Legionella pneumophila subsp. pneumophila (strain Philadelphia 1 / ATCC 33152 / DSM 7513) protein is ATP synthase subunit alpha 2.